A 347-amino-acid polypeptide reads, in one-letter code: S-adenosylmethionine:tRNA ribosyltransferase-isomerase (347 aa).

The protein belongs to the QueA family. In terms of assembly, monomer.

The protein resides in the cytoplasm. It carries out the reaction 7-aminomethyl-7-carbaguanosine(34) in tRNA + S-adenosyl-L-methionine = epoxyqueuosine(34) in tRNA + adenine + L-methionine + 2 H(+). The protein operates within tRNA modification; tRNA-queuosine biosynthesis. Transfers and isomerizes the ribose moiety from AdoMet to the 7-aminomethyl group of 7-deazaguanine (preQ1-tRNA) to give epoxyqueuosine (oQ-tRNA). The sequence is that of S-adenosylmethionine:tRNA ribosyltransferase-isomerase from Erythrobacter litoralis (strain HTCC2594).